The following is a 555-amino-acid chain: Glucose-6-phosphate isomerase (555 aa).

D-glucose 6-phosphate-binding positions include 169–170 (GS), 219–224 (SKTFTT), Gln-364, Glu-368, His-399, and Lys-521. The active-site Proton donor is the Glu-368. Catalysis depends on residues His-399 and Lys-521.

This sequence belongs to the GPI family. In terms of assembly, homodimer.

Its subcellular location is the cytoplasm. It localises to the cytosol. The catalysed reaction is alpha-D-glucose 6-phosphate = beta-D-fructose 6-phosphate. The protein operates within carbohydrate degradation; glycolysis; D-glyceraldehyde 3-phosphate and glycerone phosphate from D-glucose: step 2/4. Its function is as follows. In the cytoplasm, catalyzes the conversion of glucose-6-phosphate to fructose-6-phosphate, the second step in glycolysis, and the reverse reaction during gluconeogenesis. This is Glucose-6-phosphate isomerase (RAG2) from Kluyveromyces lactis (strain ATCC 8585 / CBS 2359 / DSM 70799 / NBRC 1267 / NRRL Y-1140 / WM37) (Yeast).